A 337-amino-acid chain; its full sequence is Alcohol dehydrogenase (337 aa).

Residues cysteine 38, histidine 61, cysteine 92, cysteine 95, cysteine 98, cysteine 106, and cysteine 148 each contribute to the Zn(2+) site. Residues 172–177, aspartate 195, lysine 200, 260–262, and arginine 331 each bind NAD(+); these read GIGGLG and VGL.

It belongs to the zinc-containing alcohol dehydrogenase family. Requires Zn(2+) as cofactor.

It carries out the reaction a primary alcohol + NAD(+) = an aldehyde + NADH + H(+). The enzyme catalyses a secondary alcohol + NAD(+) = a ketone + NADH + H(+). Substrate inhibition is not observed with any alcohols, and the enzyme-NADH dissociation is not considered to be a rate-limiting step. Functionally, NAD(+)-dependent alcohol dehydrogenase. This Geobacillus stearothermophilus (Bacillus stearothermophilus) protein is Alcohol dehydrogenase (adhT).